Consider the following 284-residue polypeptide: Shikimate dehydrogenase (NADP(+)) (284 aa).

Residues 23-25 and Thr-70 each bind shikimate; that span reads SLS. Catalysis depends on Lys-74, which acts as the Proton acceptor. Glu-86 is an NADP(+) binding site. Residues Asn-95 and Asp-111 each contribute to the shikimate site. NADP(+) is bound by residues 135 to 139, 159 to 164, and Ala-227; these read GAGGA and NRTPGR. Tyr-229 is a shikimate binding site. Gly-251 lines the NADP(+) pocket.

This sequence belongs to the shikimate dehydrogenase family. In terms of assembly, homodimer.

The catalysed reaction is shikimate + NADP(+) = 3-dehydroshikimate + NADPH + H(+). The protein operates within metabolic intermediate biosynthesis; chorismate biosynthesis; chorismate from D-erythrose 4-phosphate and phosphoenolpyruvate: step 4/7. Its function is as follows. Involved in the biosynthesis of the chorismate, which leads to the biosynthesis of aromatic amino acids. Catalyzes the reversible NADPH linked reduction of 3-dehydroshikimate (DHSA) to yield shikimate (SA). This is Shikimate dehydrogenase (NADP(+)) from Rubrobacter xylanophilus (strain DSM 9941 / JCM 11954 / NBRC 16129 / PRD-1).